We begin with the raw amino-acid sequence, 270 residues long: Large ribosomal subunit protein bL21m (270 aa).

A mitochondrion-targeting transit peptide spans 1–68; that stretch reads MASLRCFREL…HWYRSQDRCF (68 aa). The tract at residues 68–113 is disordered; sequence FSSNTKDTDEDEESSEGEDDDEEEGEDFEDSADMEVEREYSPAEKV. Residues 75–101 are compositionally biased toward acidic residues; that stretch reads TDEDEESSEGEDDDEEEGEDFEDSADM. Residues 102 to 113 show a composition bias toward basic and acidic residues; the sequence is EVEREYSPAEKV.

Belongs to the bacterial ribosomal protein bL21 family. Component of the mitochondrial ribosome large subunit. In terms of tissue distribution, constitutively expressed in roots, stems, leaves, flowers, pistils and siliques.

The protein resides in the mitochondrion. Its function is as follows. This protein binds to 23S ribosomal RNA in the presence of protein L20. Required for karyogamy during female gametophyte development, when the two polar nuclei fuse to form the diploid central cell nucleus, and during double fertilization of the egg cell and the central cell. The protein is Large ribosomal subunit protein bL21m of Arabidopsis thaliana (Mouse-ear cress).